Here is a 189-residue protein sequence, read N- to C-terminus: Frataxin-like protein, mitochondrial (189 aa).

The transit peptide at 1–50 (MNCARLHQRIPLRAMALTTTSYPALAPSHSFANASTSVMTASAMAVAHRA) directs the protein to the mitochondrion.

This sequence belongs to the frataxin family. As to quaternary structure, interacts with IscU; the interaction is direct.

The protein localises to the mitochondrion. It carries out the reaction 4 Fe(2+) + O2 + 4 H(+) = 4 Fe(3+) + 2 H2O. In terms of biological role, iron-binding protein which binds 2 iron atoms per monomer. Probably, acts as an iron carrier for the biosynthesis of Fe-S clusters. Stimulates the cysteine desulphurase activity of IscS in the presence of IscU. This is Frataxin-like protein, mitochondrial from Leishmania donovani.